The following is a 431-amino-acid chain: Glutamate-1-semialdehyde 2,1-aminomutase (431 aa).

The residue at position 267 (lysine 267) is an N6-(pyridoxal phosphate)lysine.

Belongs to the class-III pyridoxal-phosphate-dependent aminotransferase family. HemL subfamily. As to quaternary structure, homodimer. Pyridoxal 5'-phosphate serves as cofactor.

It localises to the cytoplasm. The enzyme catalyses (S)-4-amino-5-oxopentanoate = 5-aminolevulinate. It functions in the pathway porphyrin-containing compound metabolism; protoporphyrin-IX biosynthesis; 5-aminolevulinate from L-glutamyl-tRNA(Glu): step 2/2. This Syntrophomonas wolfei subsp. wolfei (strain DSM 2245B / Goettingen) protein is Glutamate-1-semialdehyde 2,1-aminomutase.